A 617-amino-acid polypeptide reads, in one-letter code: Chitin elicitor receptor kinase 1 (617 aa).

An N-terminal signal peptide occupies residues 1–23 (MKLKISLIAPILLLFSFFFAVES). Residues 24–232 (KCRTSCPLAL…KSSKQDGVGA (209 aa)) lie on the Extracellular side of the membrane. 3 cysteine pairs are disulfide-bonded: Cys25–Cys93, Cys29–Cys155, and Cys91–Cys153. N-linked (GlcNAc...) asparagine glycosylation is found at Asn40, Asn52, and Asn102. Residues 46 to 74 (VINQNLNSSIAPYDQINFDPILRYNSNIK) enclose the LysM 1; degenerate domain. In terms of domain architecture, LysM 2; degenerate spans 108 to 140 (RQEDTYERVAISNYANLTTMESLQARNPFPATN). A chitin-binding site is contributed by 109–115 (QEDTYER). An N-linked (GlcNAc...) asparagine glycan is attached at Asn123. 137 to 143 (PATNIPL) lines the chitin pocket. Asn152 carries N-linked (GlcNAc...) asparagine glycosylation. A LysM 3 domain is found at 168-211 (VTYPLRPEDSLSSIARSSGVSADILQRYNPGVNFNSGNGIVYVP). Residues 233 to 253 (GVIAGIVIGVIVALLLILFIV) form a helical membrane-spanning segment. Residues 254–617 (YYAYRKNKSK…EDLVSLMSGR (364 aa)) are Cytoplasmic-facing. Residues Ser266, Ser268, and Ser274 each carry the phosphoserine modification. A Protein kinase domain is found at 322-594 (FNLSFKIGQG…YIVVALSTLF (273 aa)). ATP-binding positions include 328–336 (IGQGGFGAV) and Lys349. Tyr390 carries the phosphotyrosine modification. The active-site Proton acceptor is the Asp441. A phosphothreonine mark is found at Thr479 and Thr519.

Belongs to the protein kinase superfamily. Ser/Thr protein kinase family. Forms homodimers and homooligomers. Homodimerization is required to trigger plant defenses. Binds to chitin, chitosan and chito-oligomer oligosaccharide elicitors. Interaction with chitin octamer (NAG(8)) promotes homodimerization while shorter chitin oligomers inhibit homodimerization. Interacts with Pseudomonas syringae hopAB2/avrPtoB. Interacts (preferentially when unphosphorylated) with PBL27 at the plasma membrane. Binds to IOS1. In terms of processing, autophosphorylated. Autophosphorylation is induced by chitin and derivatives. Post-translationally, ubiquitinated and targeted to the proteasome by hopAB2/avrPtoB of Pseudomonas syringae pv. tomato DC3000. As to expression, expressed ubiquitously, with lowest expression in pollen.

It is found in the cell membrane. It carries out the reaction L-seryl-[protein] + ATP = O-phospho-L-seryl-[protein] + ADP + H(+). The catalysed reaction is L-threonyl-[protein] + ATP = O-phospho-L-threonyl-[protein] + ADP + H(+). Activated by chitin-mediated homodimerization. In terms of biological role, lysin motif (LysM) receptor kinase that functions as a cell surface receptor in chitin elicitor (chitooligosaccharides) signaling leading to innate immunity toward both biotic and abiotic stresses (e.g. tolerance to salinity, heavy-metal stresses, and Botrytis cinerea infection). Recognizes microbe-derived N-acetylglucosamine (NAG)-containing ligands. Involved in the resistance to pathogenic fungi Alternaria brassicicola and Erysiphe cichoracearum, probably by sensing microbe-associated molecular patterns (MAMP) and pathogen-associated molecular patterns (PAMP). Plays an essential role in detecting peptidoglycans (e.g. PGNs) and restricting bacterial growth. Target of the bacterial type III effector E3-ligase protein hopAB2/avrPtoB of Pseudomonas syringae pv. tomato DC3000 that mediates ubiquitination and subsequent proteolysis, thus blocking all defense responses by suppressing PAMP-triggered immunity (PTI). Mediates chitin-induced phosphorylation of PBL27. This chain is Chitin elicitor receptor kinase 1 (CERK1), found in Arabidopsis thaliana (Mouse-ear cress).